A 250-amino-acid polypeptide reads, in one-letter code: tRNA pseudouridine synthase A (250 aa).

The Nucleophile role is filled by aspartate 52. Position 111 (tyrosine 111) interacts with substrate.

This sequence belongs to the tRNA pseudouridine synthase TruA family. Homodimer.

The catalysed reaction is uridine(38/39/40) in tRNA = pseudouridine(38/39/40) in tRNA. Its function is as follows. Formation of pseudouridine at positions 38, 39 and 40 in the anticodon stem and loop of transfer RNAs. The polypeptide is tRNA pseudouridine synthase A (Methylorubrum extorquens (strain PA1) (Methylobacterium extorquens)).